The following is a 158-amino-acid chain: Transcription factor bHLH146 (158 aa).

Positions 77-90 (SSSSNPTTTTSSSS) are enriched in low complexity. The segment at 77 to 110 (SSSSNPTTTTSSSSDGIRILERPDKEGGNEEGGI) is disordered. Residues 94–110 (RILERPDKEGGNEEGGI) show a composition bias toward basic and acidic residues. The bHLH; atypical domain maps to 94–143 (RILERPDKEGGNEEGGIEERLRELKKLLPGGEEMNVEEMLSEIGNYIKCL).

It belongs to the bHLH protein family.

Its subcellular location is the nucleus. This Arabidopsis thaliana (Mouse-ear cress) protein is Transcription factor bHLH146 (BHLH146).